Reading from the N-terminus, the 148-residue chain is Transcriptional repressor NrdR (148 aa).

Residues Met-1–Gly-22 form a disordered region. A zinc finger lies at Cys-3–Cys-34. One can recognise an ATP-cone domain in the interval Leu-49–Arg-136.

This sequence belongs to the NrdR family. It depends on Zn(2+) as a cofactor.

Functionally, negatively regulates transcription of bacterial ribonucleotide reductase nrd genes and operons by binding to NrdR-boxes. The chain is Transcriptional repressor NrdR from Deinococcus deserti (strain DSM 17065 / CIP 109153 / LMG 22923 / VCD115).